The sequence spans 326 residues: Beta-ketoacyl-[acyl-carrier-protein] synthase III (326 aa).

Catalysis depends on residues cysteine 111 and histidine 252. Residues 253 to 257 (QANIR) are ACP-binding. The active site involves asparagine 282.

Belongs to the thiolase-like superfamily. FabH family. As to quaternary structure, homodimer.

The protein resides in the plastid. The protein localises to the chloroplast. The enzyme catalyses malonyl-[ACP] + acetyl-CoA + H(+) = 3-oxobutanoyl-[ACP] + CO2 + CoA. It functions in the pathway lipid metabolism; fatty acid biosynthesis. Functionally, catalyzes the condensation reaction of fatty acid synthesis by the addition to an acyl acceptor of two carbons from malonyl-ACP. Catalyzes the first condensation reaction which initiates fatty acid synthesis and may therefore play a role in governing the total rate of fatty acid production. Possesses both acetoacetyl-ACP synthase and acetyl transacylase activities. Its substrate specificity determines the biosynthesis of branched-chain and/or straight-chain of fatty acids. The sequence is that of Beta-ketoacyl-[acyl-carrier-protein] synthase III from Porphyra purpurea (Red seaweed).